We begin with the raw amino-acid sequence, 706 residues long: Elongation factor G (706 aa).

The 290-residue stretch at 8–297 (SYVRNIGIGA…AVVDYLPSPN (290 aa)) folds into the tr-type G domain. Residues 17 to 24 (AHIDAGKT), 95 to 99 (DTPGH), and 149 to 152 (NKMD) contribute to the GTP site.

It belongs to the TRAFAC class translation factor GTPase superfamily. Classic translation factor GTPase family. EF-G/EF-2 subfamily.

The protein localises to the cytoplasm. In terms of biological role, catalyzes the GTP-dependent ribosomal translocation step during translation elongation. During this step, the ribosome changes from the pre-translocational (PRE) to the post-translocational (POST) state as the newly formed A-site-bound peptidyl-tRNA and P-site-bound deacylated tRNA move to the P and E sites, respectively. Catalyzes the coordinated movement of the two tRNA molecules, the mRNA and conformational changes in the ribosome. The polypeptide is Elongation factor G (Orientia tsutsugamushi (strain Ikeda) (Rickettsia tsutsugamushi)).